The sequence spans 370 residues: MPHQQILMLFGLLPVATNISTWWNFGSMLLACSTLQVLTGFFLAVHYTANINLAFSSIIHITRDVPYGWLMQNLHAIGASMFFICIYIHIARGLYYGSYLNKETWLSGTMLLIMLMATAFFGYVLPWGQMSFWAATVITNLLTAIPYLGNTMTTWLWGGFAINDPTLTRFFALHFILPFGIISLSSLHVILLHEEGSSNPLGTNPDIDKIPFHPYHTYKDLLMLTIMTILLLLIVSFSPDIFNDPDNFSKANPLVTPQHIKPEWYFLFAYGILRSIPNKLGGALALTMSIIILMTVPFTHTSKMRSMMFRPFMQMTFWMFAATFLVITWTATKPVEQPFTLIGQMASMLYFLFFISNPIMGWLENKIMKT.

The next 4 helical transmembrane spans lie at 25–45 (FGSM…FLAV), 69–90 (WLMQ…YIHI), 105–125 (WLSG…GYVL), and 170–190 (FFAL…LHVI). The heme b site is built by His75 and His89. Residues His174 and His188 each coordinate heme b. A ubiquinone is bound at residue His193. The next 4 helical transmembrane spans lie at 218–238 (YKDL…VSFS), 280–300 (LGGA…PFTH), 312–332 (FMQM…WTAT), and 339–358 (FTLI…ISNP).

It belongs to the cytochrome b family. The cytochrome bc1 complex contains 3 respiratory subunits (MT-CYB, CYC1 and UQCRFS1), 2 core proteins (UQCRC1 and UQCRC2) and probably 6 low-molecular weight proteins. The cofactor is heme b.

It is found in the mitochondrion inner membrane. Component of the ubiquinol-cytochrome c reductase complex (complex III or cytochrome b-c1 complex) that is part of the mitochondrial respiratory chain. The b-c1 complex mediates electron transfer from ubiquinol to cytochrome c. Contributes to the generation of a proton gradient across the mitochondrial membrane that is then used for ATP synthesis. The polypeptide is Cytochrome b (MT-CYB) (Eunectes murinus (Green anaconda)).